We begin with the raw amino-acid sequence, 903 residues long: Chitin synthase 1 (903 aa).

The interval 1 to 154 (MDPRYGAQPQ…YQDQPQQGGG (154 aa)) is disordered. Polar residues predominate over residues 67–79 (DHLNLNAAQSVDN). A glycan (N-linked (GlcNAc...) asparagine) is linked at N79. Residues 100–117 (YYNQPYEPRPQQQPYDQG) are compositionally biased toward low complexity. Residues 135–150 (HQPSDAPSEPYQDQPQ) show a composition bias toward polar residues. The next 9 membrane-spanning stretches (helical) occupy residues 444-464 (SAFG…YVAL), 543-563 (RWLN…LDFL), 573-593 (FAFF…WFAI), 619-639 (ILGV…FVLS), 654-674 (MCWF…FIAV), 700-720 (MLII…LIML), 729-749 (LVQY…YAFC), 828-848 (GVVL…LSSA), and 875-895 (IVLW…MWFL).

This sequence belongs to the chitin synthase family. Class I subfamily.

It is found in the cell membrane. It catalyses the reaction [(1-&gt;4)-N-acetyl-beta-D-glucosaminyl](n) + UDP-N-acetyl-alpha-D-glucosamine = [(1-&gt;4)-N-acetyl-beta-D-glucosaminyl](n+1) + UDP + H(+). Polymerizes chitin, a structural polymer of the cell wall and septum, by transferring the sugar moiety of UDP-GlcNAc to the non-reducing end of the growing chitin polymer. Plays an important role in nuclear sorting or distribution. In Fusarium oxysporum f. sp. lycopersici (strain 4287 / CBS 123668 / FGSC 9935 / NRRL 34936) (Fusarium vascular wilt of tomato), this protein is Chitin synthase 1.